The primary structure comprises 257 residues: Hydroxyethylthiazole kinase (257 aa).

Met49 contributes to the substrate binding site. Residues Arg124 and Thr170 each coordinate ATP. Substrate is bound at residue Gly197.

This sequence belongs to the Thz kinase family. The cofactor is Mg(2+).

It carries out the reaction 5-(2-hydroxyethyl)-4-methylthiazole + ATP = 4-methyl-5-(2-phosphooxyethyl)-thiazole + ADP + H(+). The protein operates within cofactor biosynthesis; thiamine diphosphate biosynthesis; 4-methyl-5-(2-phosphoethyl)-thiazole from 5-(2-hydroxyethyl)-4-methylthiazole: step 1/1. In terms of biological role, catalyzes the phosphorylation of the hydroxyl group of 4-methyl-5-beta-hydroxyethylthiazole (THZ). The sequence is that of Hydroxyethylthiazole kinase from Klebsiella pneumoniae subsp. pneumoniae (strain ATCC 700721 / MGH 78578).